Consider the following 909-residue polypeptide: Protein translocase subunit SecA (909 aa).

Residues glutamine 87, 105-109, and aspartate 514 each bind ATP; that span reads GEGKT. The tract at residues 879–909 is disordered; that stretch reads TPVQGGPKVGRNDPCPCGSGKKYKHCHGKLS. Zn(2+) contacts are provided by cysteine 893, cysteine 895, cysteine 904, and histidine 905. Basic residues predominate over residues 899–909; the sequence is KKYKHCHGKLS.

This sequence belongs to the SecA family. Monomer and homodimer. Part of the essential Sec protein translocation apparatus which comprises SecA, SecYEG and auxiliary proteins SecDF-YajC and YidC. Zn(2+) serves as cofactor.

It is found in the cell inner membrane. Its subcellular location is the cytoplasm. It catalyses the reaction ATP + H2O + cellular proteinSide 1 = ADP + phosphate + cellular proteinSide 2.. In terms of biological role, part of the Sec protein translocase complex. Interacts with the SecYEG preprotein conducting channel. Has a central role in coupling the hydrolysis of ATP to the transfer of proteins into and across the cell membrane, serving both as a receptor for the preprotein-SecB complex and as an ATP-driven molecular motor driving the stepwise translocation of polypeptide chains across the membrane. This is Protein translocase subunit SecA from Azoarcus sp. (strain BH72).